The primary structure comprises 224 residues: UPF0758 protein ABO_0214 (224 aa).

The 123-residue stretch at 102–224 (PLDNPDKAGQ…WVSLASRGAV (123 aa)) folds into the MPN domain. Zn(2+) is bound by residues histidine 173, histidine 175, and aspartate 186. Positions 173-186 (HNHPSGVAEPSQSD) match the JAMM motif motif.

The protein belongs to the UPF0758 family.

The sequence is that of UPF0758 protein ABO_0214 from Alcanivorax borkumensis (strain ATCC 700651 / DSM 11573 / NCIMB 13689 / SK2).